Consider the following 97-residue polypeptide: Protein 9b (97 aa).

Positions 8–97 constitute a 9b domain; it reads VPPALHLVDP…PDEFVVVTAK (90 aa).

Homodimer.

It is found in the host cytoplasmic vesicle membrane. Its subcellular location is the host cytoplasm. The protein is Protein 9b of Bat coronavirus 279/2005 (BtCoV).